Here is a 284-residue protein sequence, read N- to C-terminus: 2-dehydro-3-deoxyphosphooctonate aldolase (284 aa).

The protein belongs to the KdsA family.

Its subcellular location is the cytoplasm. It catalyses the reaction D-arabinose 5-phosphate + phosphoenolpyruvate + H2O = 3-deoxy-alpha-D-manno-2-octulosonate-8-phosphate + phosphate. Its pathway is carbohydrate biosynthesis; 3-deoxy-D-manno-octulosonate biosynthesis; 3-deoxy-D-manno-octulosonate from D-ribulose 5-phosphate: step 2/3. It participates in bacterial outer membrane biogenesis; lipopolysaccharide biosynthesis. This is 2-dehydro-3-deoxyphosphooctonate aldolase from Yersinia enterocolitica serotype O:8 / biotype 1B (strain NCTC 13174 / 8081).